We begin with the raw amino-acid sequence, 283 residues long: MATYAVGDLQGCLEPLKCLLDRVAFDPAKDRLWLVGDVVNRGPESLETLRYLYSLRDSLVCVLGNHDLHLLAASNTIERLKKGDTLREILEAPDRAELLDWLRRQKIMHYDQGRNMALVHAGIPPQWTLKKALKCAAEVESALADDTLYTAYLDGMYGNDPVKWDNDLTGVARLRVITNYFTRMRFCTAEGKLDLKSKEGADTALPGYKPWFAHKERKTRDTKIVFGHWAALEGKCDEPGVFALDTGCVWGGAMTLMNIDTGERYSCQCESPLPVTLPATAKP.

It belongs to the Ap4A hydrolase family.

The enzyme catalyses P(1),P(4)-bis(5'-adenosyl) tetraphosphate + H2O = 2 ADP + 2 H(+). Its function is as follows. Hydrolyzes diadenosine 5',5'''-P1,P4-tetraphosphate to yield ADP. In Pseudomonas fluorescens (strain SBW25), this protein is Bis(5'-nucleosyl)-tetraphosphatase, symmetrical.